A 145-amino-acid chain; its full sequence is Peptidyl-prolyl cis-trans isomerase (145 aa).

The PPIase cyclophilin-type domain maps to 1–145; that stretch reads MTQAILETEK…LSVKIVTDAA (145 aa).

It belongs to the cyclophilin-type PPIase family.

The catalysed reaction is [protein]-peptidylproline (omega=180) = [protein]-peptidylproline (omega=0). PPIases accelerate the folding of proteins. It catalyzes the cis-trans isomerization of proline imidic peptide bonds in oligopeptides. The polypeptide is Peptidyl-prolyl cis-trans isomerase (rot) (Synechococcus elongatus (strain ATCC 33912 / PCC 7942 / FACHB-805) (Anacystis nidulans R2)).